We begin with the raw amino-acid sequence, 442 residues long: MRLATDPAGSSSGLPQPRRVAVLSVHTSPLAQPGTGDAGGMNVYVLQTSLELARRGVEVEIFTRATSSADQPIVSVAPGVVVRNVVAGPFEGLDKNDLPTQLCAFTAGVLRAEATHEPGYYDILHSHYWLSGQVGWLAADRWAVPLVHTAHTLAAVKNASLAAGDTPEPPMRAIGEQQVVDEADRLIVNTEHEAQQLVSLHHADPGRIDVVHPGVDLATFTPGDRAAARAALGLDPAARIVAFVGRIQPLKAPDVLLRAAALLPDVHVVIAGGPSGSGMATPDNLVHLAGELGIAERVTFLPPQSRDHLVRVYRAADIVAVPSHNESFGLVAVEAQACGTPVVAAAVGGLPVAVRDGVSGALVHSHEPDAWATTLGEVFAADPSTFGRAAVDHAATFSWAHTVDALLTGYGRAIADHRADNTLQVAARRSGRRFSMRRGVRA.

His26 is a 1D-myo-inositol 3-phosphate binding site. UDP-N-acetyl-alpha-D-glucosamine-binding positions include Gln32–Pro33 and Gly40. 1D-myo-inositol 3-phosphate is bound by residues Asp37–Asn42, Lys95, Tyr128, Thr152, and Arg172. UDP-N-acetyl-alpha-D-glucosamine contacts are provided by Arg246, Lys251, and Gln304. Mg(2+) is bound by residues Tyr313, Arg314, and Ala316. Residues Glu326 and Glu334 each coordinate UDP-N-acetyl-alpha-D-glucosamine. Thr340 provides a ligand contact to Mg(2+).

The protein belongs to the glycosyltransferase group 1 family. MshA subfamily. Homodimer.

The enzyme catalyses 1D-myo-inositol 3-phosphate + UDP-N-acetyl-alpha-D-glucosamine = 1D-myo-inositol 2-acetamido-2-deoxy-alpha-D-glucopyranoside 3-phosphate + UDP + H(+). In terms of biological role, catalyzes the transfer of a N-acetyl-glucosamine moiety to 1D-myo-inositol 3-phosphate to produce 1D-myo-inositol 2-acetamido-2-deoxy-glucopyranoside 3-phosphate in the mycothiol biosynthesis pathway. The sequence is that of D-inositol 3-phosphate glycosyltransferase from Mycolicibacterium gilvum (strain PYR-GCK) (Mycobacterium gilvum (strain PYR-GCK)).